The sequence spans 765 residues: Palmitoyltransferase ZDHHC8 (765 aa).

Topologically, residues 1 to 13 (MPRSPGTRLKPAK) are cytoplasmic. A helical transmembrane segment spans residues 14–34 (YIPVATAAALLVGSSTLFFVF). Residues 35–52 (TCPWLTRAVSPAVPVYNG) lie on the Lumenal side of the membrane. Residues 53–73 (IIFLFVLANFSMATFMDPGVF) form a helical membrane-spanning segment. At 74–148 (PRADEDEDKE…NCIGRRNYRY (75 aa)) the chain is on the cytoplasmic side. Residues 104 to 154 (KWCATCHFYRPPRCSHCSVCDNCVEDFDHHCPWVNNCIGRRNYRYFFLFLL) form the DHHC domain. Cys134 acts as the S-palmitoyl cysteine intermediate in catalysis. The chain crosses the membrane as a helical span at residues 149–169 (FFLFLLSLSAHMVGVVAFGLV). Residues 170–190 (YVLNHAEGLGAAHTTITMAVM) lie on the Lumenal side of the membrane. The chain crosses the membrane as a helical span at residues 191–211 (CVAGLFFIPVIGLTGFHVVLV). The Cytoplasmic segment spans residues 212–765 (TRGRTTNEQV…VGGTTYEISV (554 aa)). The segment at 293 to 352 (GLGRSKSKGSLDRLDEKPLDLGPPLPPKIEAGTFSSDLQTPRPGSAESALSVQRTSPPTP) is disordered. Residues 301-311 (GSLDRLDEKPL) show a composition bias toward basic and acidic residues. Ser337 is modified (phosphoserine). Arg441 carries the omega-N-methylarginine modification. Positions 509 to 540 (LHPGATGDPPRPLPRSFSPVLGPRPREPSPVR) are disordered. A phosphoserine mark is found at Ser606, Ser627, Ser675, Ser682, Ser725, and Ser743. Positions 613 to 747 (GPGFGGARNP…PGPSASPTRH (135 aa)) are disordered. The segment covering 622 to 653 (PALQTSLSSLSSSVSRAPRTSSSSLQADQASS) has biased composition (low complexity).

It belongs to the DHHC palmitoyltransferase family. ERF2/ZDHHC9 subfamily. Widely expressed.

It is found in the golgi apparatus membrane. The protein localises to the mitochondrion membrane. The catalysed reaction is L-cysteinyl-[protein] + hexadecanoyl-CoA = S-hexadecanoyl-L-cysteinyl-[protein] + CoA. Palmitoyltransferase that catalyzes the addition of palmitate onto various protein substrates and therefore functions in several unrelated biological processes. Through the palmitoylation of ABCA1 regulates the localization of the transporter to the plasma membrane and thereby regulates its function in cholesterol and phospholipid efflux. Could also pamitoylate the D(2) dopamine receptor DRD2 and regulate its stability and localization to the plasma membrane. Could also play a role in glutamatergic transmission. In terms of biological role, (Microbial infection) Able to palmitoylate SARS coronavirus-2/SARS-CoV-2 spike protein following its synthesis in the endoplasmic reticulum (ER). In the infected cell, promotes spike biogenesis by protecting it from premature ER degradation, increases half-life and controls the lipid organization of its immediate membrane environment. Once the virus has formed, spike palmitoylation controls fusion with the target cell. The protein is Palmitoyltransferase ZDHHC8 of Homo sapiens (Human).